The primary structure comprises 391 residues: MKESIFSKKRILLLGSGELGKELVIESKRLGLEVIAIDRYEKAPAMQVADYSRVIDMGDKNILKNVIKEFNPDYVVPEIEALSIEALKELEDEGFNIVPNARTVEITMNRDKIRDLASKDLKIKTAKFDYIFEFDDLEKKADEIGFPLLLKPLMSSSGKGQSLVETKNDLQNAWKQAQANSRGKVKGVIIEEFINFDFEFTLLTVRKENGENIFCLPIGHLQSNGDYQCSWQPLEIKDSLIIEAKRMTSRILNNLNGAGLYGVEFFIKGSEVIFSELSPRPHDTGMVTLVSQNINEFELHLRAFLDLPIPHIYLIEPSATRVILSNQEYLNPIYEGLNEALEFEKTKVLIFGKPVSRKGRRMGVVLSSNSDIYLARKNADEAARKIKVSTT.

N(1)-(5-phospho-beta-D-ribosyl)glycinamide contacts are provided by residues 18 to 19 (EL) and Glu-78. ATP is bound by residues Arg-110, Lys-151, 156 to 161 (SSGKGQ), 191 to 194 (EEFI), and Glu-199. An ATP-grasp domain is found at 115–305 (DLASKDLKIK…EFELHLRAFL (191 aa)). Mg(2+) contacts are provided by Glu-264 and Glu-276. Residues Asp-283, Lys-353, and 360–361 (RR) contribute to the N(1)-(5-phospho-beta-D-ribosyl)glycinamide site.

It belongs to the PurK/PurT family. As to quaternary structure, homodimer.

It catalyses the reaction N(1)-(5-phospho-beta-D-ribosyl)glycinamide + formate + ATP = N(2)-formyl-N(1)-(5-phospho-beta-D-ribosyl)glycinamide + ADP + phosphate + H(+). Its pathway is purine metabolism; IMP biosynthesis via de novo pathway; N(2)-formyl-N(1)-(5-phospho-D-ribosyl)glycinamide from N(1)-(5-phospho-D-ribosyl)glycinamide (formate route): step 1/1. In terms of biological role, involved in the de novo purine biosynthesis. Catalyzes the transfer of formate to 5-phospho-ribosyl-glycinamide (GAR), producing 5-phospho-ribosyl-N-formylglycinamide (FGAR). Formate is provided by PurU via hydrolysis of 10-formyl-tetrahydrofolate. The polypeptide is Formate-dependent phosphoribosylglycinamide formyltransferase (Prochlorococcus marinus (strain MIT 9301)).